Consider the following 190-residue polypeptide: Putative manganese efflux pump MntP (190 aa).

6 consecutive transmembrane segments (helical) span residues 3 to 23 (MSAT…ASIG), 41 to 61 (LIFG…GFFA), 62 to 82 (SQYI…ILGG), 105 to 127 (LALL…VGLA), 143 to 163 (ATMI…PILG), and 168 to 188 (VMGG…HLGY).

Belongs to the MntP (TC 9.B.29) family.

The protein localises to the cell inner membrane. Its function is as follows. Probably functions as a manganese efflux pump. The chain is Putative manganese efflux pump MntP from Pectobacterium carotovorum subsp. carotovorum (strain PC1).